The primary structure comprises 142 residues: Large ribosomal subunit protein uL13 (142 aa).

It belongs to the universal ribosomal protein uL13 family. As to quaternary structure, part of the 50S ribosomal subunit.

This protein is one of the early assembly proteins of the 50S ribosomal subunit, although it is not seen to bind rRNA by itself. It is important during the early stages of 50S assembly. This chain is Large ribosomal subunit protein uL13, found in Mannheimia succiniciproducens (strain KCTC 0769BP / MBEL55E).